A 247-amino-acid chain; its full sequence is UPF0246 protein LSEI_2080 (247 aa).

This sequence belongs to the UPF0246 family.

The polypeptide is UPF0246 protein LSEI_2080 (Lacticaseibacillus paracasei (strain ATCC 334 / BCRC 17002 / CCUG 31169 / CIP 107868 / KCTC 3260 / NRRL B-441) (Lactobacillus paracasei)).